The primary structure comprises 444 residues: uncharacterized protein (444 aa).

Residues Met1–Arg11 are compositionally biased toward basic and acidic residues. Residues Met1 to Pro35 are disordered.

This is an uncharacterized protein from Caenorhabditis elegans.